Consider the following 326-residue polypeptide: Aspartate carbamoyltransferase catalytic subunit (326 aa).

Carbamoyl phosphate-binding residues include arginine 58 and threonine 59. L-aspartate is bound at residue lysine 86. Arginine 108, histidine 141, and glutamine 144 together coordinate carbamoyl phosphate. Arginine 181 and arginine 239 together coordinate L-aspartate. Residues glycine 280 and proline 281 each coordinate carbamoyl phosphate.

It belongs to the aspartate/ornithine carbamoyltransferase superfamily. ATCase family. In terms of assembly, heterododecamer (2C3:3R2) of six catalytic PyrB chains organized as two trimers (C3), and six regulatory PyrI chains organized as three dimers (R2).

The enzyme catalyses carbamoyl phosphate + L-aspartate = N-carbamoyl-L-aspartate + phosphate + H(+). It functions in the pathway pyrimidine metabolism; UMP biosynthesis via de novo pathway; (S)-dihydroorotate from bicarbonate: step 2/3. Its function is as follows. Catalyzes the condensation of carbamoyl phosphate and aspartate to form carbamoyl aspartate and inorganic phosphate, the committed step in the de novo pyrimidine nucleotide biosynthesis pathway. In Synechococcus sp. (strain JA-2-3B'a(2-13)) (Cyanobacteria bacterium Yellowstone B-Prime), this protein is Aspartate carbamoyltransferase catalytic subunit.